Here is a 367-residue protein sequence, read N- to C-terminus: ELAV-like protein 3 (367 aa).

RRM domains follow at residues 39 to 117 (TNLI…YARP), 125 to 205 (ANLY…FANN), and 284 to 362 (WCIF…FKTS).

The protein belongs to the RRM elav family. Interacts with MAP1B light chain LC1. In terms of tissue distribution, brain specific. Expressed in the hippocampus with expression in CA1, CA3 and dentate gyrus.

RNA-binding protein that binds to AU-rich element (ARE) sequences of target mRNAs, including VEGF mRNA. May also bind poly-A tracts via RRM 3. May be involved in neuronal differentiation and maintenance. Plays a role in the stabilization of GAP43 mRNA and in spatial learning. The polypeptide is ELAV-like protein 3 (Elavl3) (Mus musculus (Mouse)).